Here is a 260-residue protein sequence, read N- to C-terminus: Acetylglutamate kinase (260 aa).

Substrate contacts are provided by residues 46 to 47, Arg68, and Asn160; that span reads GG.

Belongs to the acetylglutamate kinase family. ArgB subfamily.

It is found in the cytoplasm. The catalysed reaction is N-acetyl-L-glutamate + ATP = N-acetyl-L-glutamyl 5-phosphate + ADP. It functions in the pathway amino-acid biosynthesis; L-arginine biosynthesis; N(2)-acetyl-L-ornithine from L-glutamate: step 2/4. Its function is as follows. Catalyzes the ATP-dependent phosphorylation of N-acetyl-L-glutamate. This chain is Acetylglutamate kinase, found in Shewanella sp. (strain ANA-3).